A 208-amino-acid polypeptide reads, in one-letter code: Protein disulfide-isomerase A3 (208 aa).

One can recognise a Thioredoxin 1 domain in the interval Arg1–Lys44. Lys44 carries the post-translational modification N6-succinyllysine. Lys49 is subject to N6-acetyllysine. Thr133 is modified (phosphothreonine). Residues Ser151–Lys208 enclose the Thioredoxin 2 domain. An N6-acetyllysine modification is found at Lys163.

This sequence belongs to the protein disulfide isomerase family. As to quaternary structure, part of the major histocompatibility complex class I (MHC I) peptide loading complex composed of TAP1, TAP2, B2M, MHC heavy chain, TAPBP, PDIA3, and CALR. Interacts with ERP27 and CANX. Interacts with SERPINA2 and SERPINA1. Interacts with ATP2A2. Within the major histocompatibility complex class I (MHC I) peptide loading complex forms reversible disulfide-linked heterodimers with TAPBP as part of its protein folding chaperone activity. This is essential to assist the dynamic assembly of the MHC I complex with high affinity antigens in the endoplasmic reticulum. Post-translationally, phosphorylated. In the caput epididymal spermatozoa, detected in the mid-peice and at low levels in the principal piece. In the cauda epididymal spermatozoa, detected at very low levels in the principal piece and not in the mid-piece (at protein level).

It localises to the endoplasmic reticulum. It is found in the endoplasmic reticulum lumen. Its subcellular location is the melanosome. It carries out the reaction Catalyzes the rearrangement of -S-S- bonds in proteins.. Its function is as follows. Protein disulfide isomerase that catalyzes the formation, isomerization, and reduction or oxidation of disulfide bonds in client proteins and functions as a protein folding chaperone. Core component of the major histocompatibility complex class I (MHC I) peptide loading complex where it functions as an essential folding chaperone for TAPBP. Through TAPBP, assists the dynamic assembly of the MHC I complex with high affinity antigens in the endoplasmic reticulum. Therefore, plays a crucial role in the presentation of antigens to cytotoxic T cells in adaptive immunity. The polypeptide is Protein disulfide-isomerase A3 (Mesocricetus auratus (Golden hamster)).